A 562-amino-acid chain; its full sequence is Dihydroxy-acid dehydratase (562 aa).

Asp-80 serves as a coordination point for Mg(2+). Cys-121 lines the [2Fe-2S] cluster pocket. The Mg(2+) site is built by Asp-122 and Lys-123. The residue at position 123 (Lys-123) is an N6-carboxylysine. Cys-194 contributes to the [2Fe-2S] cluster binding site. Position 446 (Glu-446) interacts with Mg(2+). The active-site Proton acceptor is Ser-472.

This sequence belongs to the IlvD/Edd family. Homodimer. [2Fe-2S] cluster is required as a cofactor. The cofactor is Mg(2+).

The enzyme catalyses (2R)-2,3-dihydroxy-3-methylbutanoate = 3-methyl-2-oxobutanoate + H2O. It carries out the reaction (2R,3R)-2,3-dihydroxy-3-methylpentanoate = (S)-3-methyl-2-oxopentanoate + H2O. It functions in the pathway amino-acid biosynthesis; L-isoleucine biosynthesis; L-isoleucine from 2-oxobutanoate: step 3/4. It participates in amino-acid biosynthesis; L-valine biosynthesis; L-valine from pyruvate: step 3/4. In terms of biological role, functions in the biosynthesis of branched-chain amino acids. Catalyzes the dehydration of (2R,3R)-2,3-dihydroxy-3-methylpentanoate (2,3-dihydroxy-3-methylvalerate) into 2-oxo-3-methylpentanoate (2-oxo-3-methylvalerate) and of (2R)-2,3-dihydroxy-3-methylbutanoate (2,3-dihydroxyisovalerate) into 2-oxo-3-methylbutanoate (2-oxoisovalerate), the penultimate precursor to L-isoleucine and L-valine, respectively. The polypeptide is Dihydroxy-acid dehydratase (Staphylococcus aureus (strain USA300 / TCH1516)).